The sequence spans 244 residues: Venom nerve growth factor 3 (244 aa).

The first 18 residues, 1 to 18, serve as a signal peptide directing secretion; it reads MSMLCYTLIIAFLIGIWA. A propeptide spanning residues 19–125 is cleaved from the precursor; that stretch reads APKSEDNVPL…TLNRNIRAKR (107 aa). Basic and acidic residues predominate over residues 47-66; the sequence is GLKTSRNTDQRHPAPKKAED. A disordered region spans residues 47-67; that stretch reads GLKTSRNTDQRHPAPKKAEDQ. Intrachain disulfides connect C139–C205, C181–C233, and C193–C235.

Belongs to the NGF-beta family. In terms of assembly, homodimer; non-covalently linked. Expressed by the venom gland.

The protein localises to the secreted. Its function is as follows. Nerve growth factor is important for the development and maintenance of the sympathetic and sensory nervous systems. It stimulates division and differentiation of sympathetic and embryonic sensory neurons as well as basal forebrain cholinergic neurons in the brain. Its relevance in the snake venom is not clear. However, it has been shown to inhibit metalloproteinase-dependent proteolysis of platelet glycoprotein Ib alpha, suggesting a metalloproteinase inhibition to prevent metalloprotease autodigestion and/or protection against prey proteases. Binds a lipid between the two protein chains in the homodimer. The lipid-bound form promotes histamine relase from mouse mast cells, contrary to the lipid-free form. The polypeptide is Venom nerve growth factor 3 (Notechis scutatus scutatus (Mainland tiger snake)).